The chain runs to 563 residues: MMISEKPLGEESIRQDLEVLTVSRRLVKSVSQKLKKKIHKTEVVEDEEVARGAVNCLSISVGCRVADTGEDFEEDLSNKRWSSASEDGKGLMTICGTEEIRLDCFSYGVRERFWKKNNRRYLADSGQDYRKHVYLPDDILEMCLMRLPLTSLLNAHLVCKKWQSMANTQRFLQMRREGSFQTPWLFLFAALKDGCSSGDIHGYDVSQDKWHRIETDLLKGRFMYSVTSIHEEIYIVGGRSMDRNSFKSHRGILVFSPSIKAWRKIASMRHARSLPIVGATEVTSEFSTMQTKQNRQDRRFHLSRVGGESDVYEDPHRLSVRRQNRNSADQNGTKSHRLIRQKLDRLNRNSSKRFVLIAIGGTGIFDEPLDSGEIYDSATNTWSEMQRLPMGFGVVSCGIICNGIFYAYSENDKLSGYDIERGFWITIQTSPIPPRVHEFYPKLVSCNHRLFMLSVSWCDEGDGQIGRRNKAVRKLWELDLVYLTWTEVSVHPDAPMDWNATYVSDQNILMGVEMFKIFGQVLSFFTVCDILTEEASWRHVSRNQRNQKLNLSCMNKTIALLHL.

An F-box domain is found at 129–175; that stretch reads YRKHVYLPDDILEMCLMRLPLTSLLNAHLVCKKWQSMANTQRFLQMR. Kelch repeat units lie at residues 184-231, 232-282, and 355-402; these read WLFL…SIHE, EIYI…ATEV, and VLIA…IICN.

The protein is F-box/kelch-repeat protein At5g42360 of Arabidopsis thaliana (Mouse-ear cress).